The chain runs to 358 residues: Peptide chain release factor 1 (358 aa).

Gln-233 is modified (N5-methylglutamine).

This sequence belongs to the prokaryotic/mitochondrial release factor family. Methylated by PrmC. Methylation increases the termination efficiency of RF1.

Its subcellular location is the cytoplasm. In terms of biological role, peptide chain release factor 1 directs the termination of translation in response to the peptide chain termination codons UAG and UAA. This chain is Peptide chain release factor 1, found in Geobacillus kaustophilus (strain HTA426).